Here is a 203-residue protein sequence, read N- to C-terminus: Mitotic spindle assembly checkpoint protein MAD2A (203 aa).

One can recognise an HORMA domain in the interval 14–196 (KGSTEIVTEF…TTIHKVESMV (183 aa)). The tract at residues 194 to 203 (SMVAYKISND) is required for assuming the closed conformation and for interaction with cdc20.

It belongs to the MAD2 family. In terms of assembly, interacts with cdc20.

It localises to the nucleus. It is found in the chromosome. Its subcellular location is the centromere. The protein localises to the kinetochore. The protein resides in the cytoplasm. Component of the spindle-assembly checkpoint that prevents the onset of anaphase until all chromosomes are properly aligned at the metaphase plate. Required for the execution of the mitotic checkpoint which monitors the process of kinetochore-spindle attachment and inhibits the activity of the anaphase promoting complex until all chromosomes are aligned at the metaphase plate. The protein is Mitotic spindle assembly checkpoint protein MAD2A (mad2l1-1) of Dictyostelium discoideum (Social amoeba).